We begin with the raw amino-acid sequence, 420 residues long: L-glutamine:2-deoxy-scyllo-inosose aminotransferase (420 aa).

At lysine 201 the chain carries N6-(pyridoxal phosphate)lysine.

It belongs to the DegT/DnrJ/EryC1 family. L-glutamine:2-deoxy-scyllo-inosose/scyllo-inosose aminotransferase subfamily. Pyridoxal 5'-phosphate is required as a cofactor.

The enzyme catalyses 2-deoxy-L-scyllo-inosose + L-glutamine = 2-deoxy-scyllo-inosamine + 2-oxoglutaramate. It carries out the reaction 3-amino-2,3-dideoxy-scyllo-inosose + L-glutamine = 2-deoxystreptamine + 2-oxoglutaramate. The protein operates within metabolic intermediate biosynthesis; 2-deoxystreptamine biosynthesis; 2-deoxystreptamine from D-glucose 6-phosphate: step 2/4. It participates in antibiotic biosynthesis; gentamicin biosynthesis. In terms of biological role, catalyzes the PLP-dependent transamination of 2-deoxy-scyllo-inosose (2-DOI) to form 2-deoxy-scyllo-inosamine (2-DOIA) using L-glutamine as the amino donor. Also catalyzes the transamination of 3-amino-2,3-dideoxy-scyllo-inosose (keto-2-DOIA) into 2-deoxystreptamine (2-DOS). In Micromonospora echinospora (Micromonospora purpurea), this protein is L-glutamine:2-deoxy-scyllo-inosose aminotransferase (gntA).